Reading from the N-terminus, the 317-residue chain is UV DNA damage endonuclease (317 aa).

It belongs to the uve1/UvsE family.

Functionally, component in a DNA repair pathway. Removal of UV LIGHT damaged nucleotides. Recognizes pyrimidine dimers and cleave a phosphodiester bond immediately 5' to the lesion. The chain is UV DNA damage endonuclease from Bacillus cereus (strain 03BB102).